Reading from the N-terminus, the 56-residue chain is UPF0291 protein Clos_1191 (56 aa).

It belongs to the UPF0291 family.

Its subcellular location is the cytoplasm. This chain is UPF0291 protein Clos_1191, found in Alkaliphilus oremlandii (strain OhILAs) (Clostridium oremlandii (strain OhILAs)).